Consider the following 246-residue polypeptide: Uridylate kinase (246 aa).

Residue 16-19 (KFSG) coordinates ATP. A UMP-binding site is contributed by Gly58. ATP contacts are provided by Gly59 and Arg63. UMP contacts are provided by residues Asp78 and 139 to 146 (TGNPFFTT). Residues Thr166, Tyr172, and Asp175 each coordinate ATP.

It belongs to the UMP kinase family. In terms of assembly, homohexamer.

The protein localises to the cytoplasm. The catalysed reaction is UMP + ATP = UDP + ADP. It participates in pyrimidine metabolism; CTP biosynthesis via de novo pathway; UDP from UMP (UMPK route): step 1/1. With respect to regulation, inhibited by UTP. Functionally, catalyzes the reversible phosphorylation of UMP to UDP. The polypeptide is Uridylate kinase (Legionella pneumophila (strain Corby)).